Here is a 341-residue protein sequence, read N- to C-terminus: L-threonine 3-dehydrogenase (341 aa).

C38 contacts Zn(2+). Catalysis depends on charge relay system residues T40 and H43. 6 residues coordinate Zn(2+): H63, E64, C93, C96, C99, and C107. NAD(+) contacts are provided by residues I175, D195, R200, 262–264, and 286–287; these read LGI and IY.

Belongs to the zinc-containing alcohol dehydrogenase family. Homotetramer. It depends on Zn(2+) as a cofactor.

The protein resides in the cytoplasm. It carries out the reaction L-threonine + NAD(+) = (2S)-2-amino-3-oxobutanoate + NADH + H(+). The protein operates within amino-acid degradation; L-threonine degradation via oxydo-reductase pathway; glycine from L-threonine: step 1/2. Its function is as follows. Catalyzes the NAD(+)-dependent oxidation of L-threonine to 2-amino-3-ketobutyrate. This is L-threonine 3-dehydrogenase from Escherichia coli O157:H7.